The chain runs to 366 residues: MTYIYRDTKITTKSTIPFLIFFLFCFSNLSMATLKHKPVNLVFYVYNLIIIFSSHSSTAELRRLLQPSKTDGTVSFLVIGDWGRRGSYNQSQVALQMGEIGEKLDIDFVISTGDNFYDNGLTSLHDPLFQDSFTNIYTAPSLQKPWYSVLGNHDYRGDVRAQLSPMLRALDNRWVCMRSFIVNAEIVDLFFVDTTPFVDKYFIQPNKHVYDWSGVLPRQTYLNNLLKELDVALRESVAKWKIVIGHHTIKSAGHHGNTIELEKHLLPILQANEVDLYVNGHDHCLEHISSVDSNIQFMTSGGGSKAWKGGDVNYVEPEEMRFYYDGQGFMSVHVSEAELRVVFYDVFGHVLHHWKKTYKEALYFAS.

The N-terminal stretch at 1–32 is a signal peptide; the sequence is MTYIYRDTKITTKSTIPFLIFFLFCFSNLSMA. Aspartate 81 provides a ligand contact to Fe cation. Asparagine 89 carries N-linked (GlcNAc...) asparagine glycosylation. Fe cation-binding residues include aspartate 114 and tyrosine 117. Aspartate 114 serves as a coordination point for Zn(2+). Positions 152 and 246 each coordinate Zn(2+). Catalysis depends on histidine 255, which acts as the Proton donor. Histidine 281 serves as a coordination point for Zn(2+). 281–283 provides a ligand contact to substrate; the sequence is HDH. Position 283 (histidine 283) interacts with Fe cation.

Belongs to the metallophosphoesterase superfamily. Purple acid phosphatase family. Homodimer. Fe cation serves as cofactor. Requires Zn(2+) as cofactor. As to expression, expressed in stems, leaves, flowers and siliques.

The protein resides in the secreted. It carries out the reaction a phosphate monoester + H2O = an alcohol + phosphate. The protein is Purple acid phosphatase 3 (PAP3) of Arabidopsis thaliana (Mouse-ear cress).